The chain runs to 617 residues: UvrABC system protein C (617 aa).

The GIY-YIG domain maps to 22–100 (NLPGVYRFFN…IKALSPKYNI (79 aa)). In terms of domain architecture, UVR spans 209–244 (DELTRTLQHKMQTAAANLQFEEAARYRDQIQALGIM).

The protein belongs to the UvrC family. Interacts with UvrB in an incision complex.

The protein localises to the cytoplasm. The UvrABC repair system catalyzes the recognition and processing of DNA lesions. UvrC both incises the 5' and 3' sides of the lesion. The N-terminal half is responsible for the 3' incision and the C-terminal half is responsible for the 5' incision. The polypeptide is UvrABC system protein C (Neisseria meningitidis serogroup B (strain ATCC BAA-335 / MC58)).